The primary structure comprises 492 residues: 2-succinylbenzoate--CoA ligase (492 aa).

Belongs to the ATP-dependent AMP-binding enzyme family. MenE subfamily.

It carries out the reaction 2-succinylbenzoate + ATP + CoA = 2-succinylbenzoyl-CoA + AMP + diphosphate. It participates in quinol/quinone metabolism; 1,4-dihydroxy-2-naphthoate biosynthesis; 1,4-dihydroxy-2-naphthoate from chorismate: step 5/7. Its pathway is quinol/quinone metabolism; menaquinone biosynthesis. Functionally, converts 2-succinylbenzoate (OSB) to 2-succinylbenzoyl-CoA (OSB-CoA). The chain is 2-succinylbenzoate--CoA ligase from Staphylococcus aureus (strain MRSA252).